A 335-amino-acid polypeptide reads, in one-letter code: Holliday junction branch migration complex subunit RuvB (335 aa).

Positions 1–181 are large ATPase domain (RuvB-L); the sequence is MSERVISPEP…FGLLIRLNLY (181 aa). ATP contacts are provided by residues Leu20, Arg21, Gly62, Lys65, Thr66, Thr67, 128–130, Arg171, Tyr181, and Arg218; that span reads EDF. Residue Thr66 participates in Mg(2+) binding. Residues 182-252 are small ATPAse domain (RuvB-S); it reads SPEDLEKIVT…IAGAGLALLQ (71 aa). The interval 255–335 is head domain (RuvB-H); the sequence is ELGLDDIDRR…KLNHSQKTLF (81 aa). DNA-binding residues include Arg310 and Arg315.

Belongs to the RuvB family. In terms of assembly, homohexamer. Forms an RuvA(8)-RuvB(12)-Holliday junction (HJ) complex. HJ DNA is sandwiched between 2 RuvA tetramers; dsDNA enters through RuvA and exits via RuvB. An RuvB hexamer assembles on each DNA strand where it exits the tetramer. Each RuvB hexamer is contacted by two RuvA subunits (via domain III) on 2 adjacent RuvB subunits; this complex drives branch migration. In the full resolvosome a probable DNA-RuvA(4)-RuvB(12)-RuvC(2) complex forms which resolves the HJ.

It localises to the cytoplasm. The enzyme catalyses ATP + H2O = ADP + phosphate + H(+). In terms of biological role, the RuvA-RuvB-RuvC complex processes Holliday junction (HJ) DNA during genetic recombination and DNA repair, while the RuvA-RuvB complex plays an important role in the rescue of blocked DNA replication forks via replication fork reversal (RFR). RuvA specifically binds to HJ cruciform DNA, conferring on it an open structure. The RuvB hexamer acts as an ATP-dependent pump, pulling dsDNA into and through the RuvAB complex. RuvB forms 2 homohexamers on either side of HJ DNA bound by 1 or 2 RuvA tetramers; 4 subunits per hexamer contact DNA at a time. Coordinated motions by a converter formed by DNA-disengaged RuvB subunits stimulates ATP hydrolysis and nucleotide exchange. Immobilization of the converter enables RuvB to convert the ATP-contained energy into a lever motion, pulling 2 nucleotides of DNA out of the RuvA tetramer per ATP hydrolyzed, thus driving DNA branch migration. The RuvB motors rotate together with the DNA substrate, which together with the progressing nucleotide cycle form the mechanistic basis for DNA recombination by continuous HJ branch migration. Branch migration allows RuvC to scan DNA until it finds its consensus sequence, where it cleaves and resolves cruciform DNA. This Methanoregula boonei (strain DSM 21154 / JCM 14090 / 6A8) protein is Holliday junction branch migration complex subunit RuvB.